The chain runs to 35 residues: Photosystem I reaction center subunit Z (35 aa).

The chain crosses the membrane as a helical span at residues 10–30 (LVIITTLVVPFMAAAALLFII).

In terms of assembly, the G.violaceus PSI reaction center is composed of one copy each of PsaA,B,C,D,E,F,L,M and Z, and forms trimeric complexes.

It localises to the cell inner membrane. This is Photosystem I reaction center subunit Z (psaZ) from Gloeobacter violaceus (strain ATCC 29082 / PCC 7421).